A 102-amino-acid polypeptide reads, in one-letter code: Small ribosomal subunit protein uS10 (102 aa).

It belongs to the universal ribosomal protein uS10 family. As to quaternary structure, part of the 30S ribosomal subunit.

Its function is as follows. Involved in the binding of tRNA to the ribosomes. This Methylocella silvestris (strain DSM 15510 / CIP 108128 / LMG 27833 / NCIMB 13906 / BL2) protein is Small ribosomal subunit protein uS10.